The chain runs to 142 residues: MHLRLLKLHPNAIIPKYQHEGDSGVDLHAIEPVAIAPHKTALIKTGLAAEIPIGTELQIRPRSGLALKQSVTVLNSPGTIDANYRGEIGVILINHSDTVFEVKAGMRIAQMVMVPVMHLDITVVDKVSDTSRGTGGFGSTGT.

Substrate contacts are provided by residues 62–64 (RSG), Asn75, and 79–81 (TID).

It belongs to the dUTPase family. Mg(2+) serves as cofactor.

The enzyme catalyses dUTP + H2O = dUMP + diphosphate + H(+). It functions in the pathway pyrimidine metabolism; dUMP biosynthesis; dUMP from dCTP (dUTP route): step 2/2. In terms of biological role, this enzyme is involved in nucleotide metabolism: it produces dUMP, the immediate precursor of thymidine nucleotides and it decreases the intracellular concentration of dUTP so that uracil cannot be incorporated into DNA. The protein is Deoxyuridine 5'-triphosphate nucleotidohydrolase of Picosynechococcus sp. (strain ATCC 27264 / PCC 7002 / PR-6) (Agmenellum quadruplicatum).